The following is a 121-amino-acid chain: Structural protein p14.5 (121 aa).

Disordered stretches follow at residues 1–24 (MADFNSPIQYLKEDSRDRTSIGSL) and 84–121 (TSLVPEETDNKPEDDEESGAKPKKKKHLFPKLSSHKSK). The residue at position 2 (Ala-2) is an N-acetylalanine; by host. Residues 104–121 (KPKKKKHLFPKLSSHKSK) show a composition bias toward basic residues.

Belongs to the asfivirus structural protein p14.5 family. Interacts with the major capsid protein. Interacts with host IRF3; this interaction interferes with the recruitment of IRF3 to TBK1. In terms of processing, acetylated.

It is found in the virion. Structural protein required for transport of intracellular particles from the assembly sites to the plasma membrane. Binds to both ssDNA and dsDNA. Suppressed the activation of the cGAS/STING pathway by interfering with the recruitment of IRF3 to TBK1, which in turn suppresses IRF3 phosphorylation, decreasing interferon production. The sequence is that of Structural protein p14.5 from Ornithodoros (relapsing fever ticks).